The sequence spans 527 residues: Glutamate--cysteine ligase (527 aa).

It belongs to the glutamate--cysteine ligase type 1 family. Type 1 subfamily.

The enzyme catalyses L-cysteine + L-glutamate + ATP = gamma-L-glutamyl-L-cysteine + ADP + phosphate + H(+). Its pathway is sulfur metabolism; glutathione biosynthesis; glutathione from L-cysteine and L-glutamate: step 1/2. The polypeptide is Glutamate--cysteine ligase (Bordetella bronchiseptica (strain ATCC BAA-588 / NCTC 13252 / RB50) (Alcaligenes bronchisepticus)).